The primary structure comprises 324 residues: MASPTMKLNNGLDMPQVGFGLWKVENSVCADVVYNAIKAGYRLFDGACDYGNEVECGQGVKRAIDEGLVKREELFIVSKLWNTFHDGERVEPIVKKQLADWGIEYFDLYLIHFPVALEYVDPSVRYPPGWHYDDAGTEIRPSKASIQETWTAMEKLVDAGLSKAIGVSNFQAQLLYDMLRYARIRPATLQIEHHPYLVQQRLIEACKTEGIVVTAYSSFGPASFKEFNMEHAEALTPLLEEPTIVKLAEKYGKDPGQVLLRWATQRGLAVIPKSSREKTMKSNFEAVGWDMEDSDIKTISALDKGIRFNQPANYFSTDKLWIFG.

Residue Tyr-50 is the Proton donor of the active site. Residue His-112 participates in substrate binding. NAD(+) is bound by residues 168-169 (SN), 217-226 (SSFGPASFKE), and 273-283 (KSSREKTMKSN).

This sequence belongs to the aldo/keto reductase family.

It catalyses the reaction xylitol + NAD(+) = D-xylose + NADH + H(+). The catalysed reaction is xylitol + NADP(+) = D-xylose + NADPH + H(+). It participates in carbohydrate metabolism; D-xylose degradation. Functionally, catalyzes the initial reaction in the xylose utilization pathway by reducing D-xylose into xylitol. Xylose is a major component of hemicelluloses such as xylan. Most fungi utilize D-xylose via three enzymatic reactions, xylose reductase (XR), xylitol dehydrogenase (XDH), and xylulokinase, to form xylulose 5-phosphate, which enters pentose phosphate pathway. The sequence is that of NAD(P)H-dependent D-xylose reductase XYR1 (XYR1) from Pyricularia oryzae (strain 70-15 / ATCC MYA-4617 / FGSC 8958) (Rice blast fungus).